A 224-amino-acid polypeptide reads, in one-letter code: Small ribosomal subunit protein uS3 (224 aa).

Positions 39-107 constitute a KH type-2 domain; sequence VRKYIQNALA…PVHINIEEIR (69 aa).

This sequence belongs to the universal ribosomal protein uS3 family. Part of the 30S ribosomal subunit. Forms a tight complex with proteins S10 and S14.

Its function is as follows. Binds the lower part of the 30S subunit head. Binds mRNA in the 70S ribosome, positioning it for translation. The polypeptide is Small ribosomal subunit protein uS3 (Saccharophagus degradans (strain 2-40 / ATCC 43961 / DSM 17024)).